The primary structure comprises 71 residues: uncharacterized protein (71 aa).

Positions isoleucine 5–isoleucine 59 constitute an HTH cro/C1-type domain. The segment at residues glutamine 16–lysine 35 is a DNA-binding region (H-T-H motif).

This is an uncharacterized protein from Archaeoglobus fulgidus (strain ATCC 49558 / DSM 4304 / JCM 9628 / NBRC 100126 / VC-16).